A 35-amino-acid polypeptide reads, in one-letter code: ANKRPVWIMGHMVNAVYQIDEFVNLGANSIDTDVS.

H11 is an active-site residue. D33 serves as a coordination point for Mg(2+).

The protein belongs to the arthropod phospholipase D family. Class II subfamily. Mg(2+) serves as cofactor. Post-translationally, contains 2 disulfide bonds. In terms of tissue distribution, expressed by the venom gland.

Its subcellular location is the secreted. The enzyme catalyses an N-(acyl)-sphingosylphosphocholine = an N-(acyl)-sphingosyl-1,3-cyclic phosphate + choline. It catalyses the reaction an N-(acyl)-sphingosylphosphoethanolamine = an N-(acyl)-sphingosyl-1,3-cyclic phosphate + ethanolamine. The catalysed reaction is a 1-acyl-sn-glycero-3-phosphocholine = a 1-acyl-sn-glycero-2,3-cyclic phosphate + choline. It carries out the reaction a 1-acyl-sn-glycero-3-phosphoethanolamine = a 1-acyl-sn-glycero-2,3-cyclic phosphate + ethanolamine. Dermonecrotic toxins cleave the phosphodiester linkage between the phosphate and headgroup of certain phospholipids (sphingolipid and lysolipid substrates), forming an alcohol (often choline) and a cyclic phosphate. This toxin acts on sphingomyelin (SM). It may also act on ceramide phosphoethanolamine (CPE), lysophosphatidylcholine (LPC) and lysophosphatidylethanolamine (LPE), but not on lysophosphatidylserine (LPS), and lysophosphatidylglycerol (LPG). It acts by transphosphatidylation, releasing exclusively cyclic phosphate products as second products. Induces dermonecrosis, hemolysis, increased vascular permeability, edema, inflammatory response, and platelet aggregation. This chain is Dermonecrotic toxin LrSicTox-alphaI-1, found in Loxosceles reclusa (Brown recluse spider).